The primary structure comprises 311 residues: ADP-ribosyl cyclase/cyclic ADP-ribose hydrolase 2 (311 aa).

The N-terminal stretch at 1–24 (MAVQGGLLSLWLWLWLSLLTVLLG) is a signal peptide. 3 disulfides stabilise this stretch: Cys-46-Cys-60, Cys-76-Cys-156, and Cys-137-Cys-150. Asn-59 and Asn-88 each carry an N-linked (GlcNAc...) asparagine glycan. Trp-102 contributes to the NAD(+) binding site. Trp-102 contacts nicotinamide. A glycan (N-linked (GlcNAc...) asparagine) is linked at Asn-141. Trp-165 is a binding site for NAD(+). A glycan (N-linked (GlcNAc...) asparagine) is linked at Asn-185. An NAD(+)-binding site is contributed by Glu-203. Disulfide bonds link Cys-231-Cys-252 and Cys-264-Cys-273. Ser-286 is lipidated: GPI-anchor amidated serine. A propeptide spanning residues 287–311 (ASLHAIGDASLLISLLVALASSSQA) is cleaved from the precursor.

This sequence belongs to the ADP-ribosyl cyclase family. As to quaternary structure, homodimer. As to expression, expressed in the bone marrow, spleen and thymus in lymphoid organs, and the lung, kidney and heart in non-lymphoid organs.

The protein localises to the cell membrane. The enzyme catalyses NAD(+) + H2O = ADP-D-ribose + nicotinamide + H(+). It catalyses the reaction NAD(+) = cyclic ADP-beta-D-ribose + nicotinamide + H(+). It carries out the reaction cyclic ADP-beta-D-ribose + H2O = ADP-D-ribose. Functionally, catalyzes both the synthesis of cyclic ADP-beta-D-ribose (cADPR) from NAD(+), and its hydrolysis to ADP-D-ribose (ADPR). Cyclic ADPR is known to serve as an endogenous second messenger that elicits calcium release from intracellular stores, and thus regulates the mobilization of intracellular calcium. May be involved in pre-B-cell growth. This Mus musculus (Mouse) protein is ADP-ribosyl cyclase/cyclic ADP-ribose hydrolase 2 (Bst1).